Reading from the N-terminus, the 243-residue chain is L-fucose operon activator (243 aa).

An HTH deoR-type domain is found at 1-57 (MKAARQQAIVDLLLNHTSLTTEALSEQLKVSKETIRRDLNELQTQGKILRNHGRAKY). The segment at residues 19-38 (LTTEALSEQLKVSKETIRRD) is a DNA-binding region (H-T-H motif).

Functionally, transcriptional activator of the fuc operon. The protein is L-fucose operon activator (fucR) of Escherichia coli (strain K12).